Consider the following 145-residue polypeptide: MAFFTGLWGPFTCVSRVLSHHCFSTTGSLSAIQKMTRVRVVDNSALGNSPYHRAPRCIHVYKKNGVGKVGDQILLAIKGQKKKALIVGHCMPGPRMTPRFDSNNVVLIEDNGNPVGTRIKTPIPTSLRKREGEYSKVLAIAQNFV.

Residues 1-30 constitute a mitochondrion transit peptide; it reads MAFFTGLWGPFTCVSRVLSHHCFSTTGSLS.

Belongs to the universal ribosomal protein uL14 family. Component of the mitochondrial large ribosomal subunit (mt-LSU). Mature mammalian 55S mitochondrial ribosomes consist of a small (28S) and a large (39S) subunit. The 28S small subunit contains a 12S ribosomal RNA (12S mt-rRNA) and 30 different proteins. The 39S large subunit contains a 16S rRNA (16S mt-rRNA), a copy of mitochondrial valine transfer RNA (mt-tRNA(Val)), which plays an integral structural role, and 52 different proteins. Interacts with MALSU1.

It is found in the mitochondrion. In terms of biological role, forms part of 2 intersubunit bridges in the assembled ribosome. Upon binding to MALSU1 intersubunit bridge formation is blocked, preventing ribosome formation and repressing translation. The polypeptide is Large ribosomal subunit protein uL14m (MRPL14) (Homo sapiens (Human)).